We begin with the raw amino-acid sequence, 235 residues long: Transcriptional regulatory protein MalR (235 aa).

Residues 3 to 119 form the Response regulatory domain; the sequence is NVLIVEDDPM…RFQTALSDYR (117 aa). At Asp54 the chain carries 4-aspartylphosphate. A DNA-binding region (H-T-H motif) is located at residues 178–197; that stretch reads TEDLAKHTEISQVSIRKYLK.

In terms of processing, phosphorylated and activated by MalK.

Its subcellular location is the cytoplasm. Its function is as follows. Member of a two-component regulatory system MalK/MalR. Activates transcription of maeA, maeN and yflS in presence of malate by binding to their promoter region. This chain is Transcriptional regulatory protein MalR (malR), found in Bacillus subtilis (strain 168).